The chain runs to 207 residues: Imidazole glycerol phosphate synthase subunit HisH (207 aa).

The region spanning 1 to 206 (MMIVIDYDAG…KEYVYENTAR (206 aa)) is the Glutamine amidotransferase type-1 domain. The active-site Nucleophile is the Cys-79. Residues His-181 and Glu-183 contribute to the active site.

In terms of assembly, heterodimer of HisH and HisF.

The protein localises to the cytoplasm. It carries out the reaction 5-[(5-phospho-1-deoxy-D-ribulos-1-ylimino)methylamino]-1-(5-phospho-beta-D-ribosyl)imidazole-4-carboxamide + L-glutamine = D-erythro-1-(imidazol-4-yl)glycerol 3-phosphate + 5-amino-1-(5-phospho-beta-D-ribosyl)imidazole-4-carboxamide + L-glutamate + H(+). It catalyses the reaction L-glutamine + H2O = L-glutamate + NH4(+). It participates in amino-acid biosynthesis; L-histidine biosynthesis; L-histidine from 5-phospho-alpha-D-ribose 1-diphosphate: step 5/9. In terms of biological role, IGPS catalyzes the conversion of PRFAR and glutamine to IGP, AICAR and glutamate. The HisH subunit catalyzes the hydrolysis of glutamine to glutamate and ammonia as part of the synthesis of IGP and AICAR. The resulting ammonia molecule is channeled to the active site of HisF. The polypeptide is Imidazole glycerol phosphate synthase subunit HisH (Streptococcus sanguinis (strain SK36)).